Reading from the N-terminus, the 556-residue chain is Thermosome subunit beta (556 aa).

The segment at 530–556 is disordered; the sequence is LSTDKGDDDGGAGGMGGGMGGGMGGMM. Gly residues predominate over residues 540-556; sequence GAGGMGGGMGGGMGGMM.

It belongs to the TCP-1 chaperonin family. Forms an oligomeric complex of eight-membered rings.

Its function is as follows. Molecular chaperone; binds unfolded polypeptides in vitro, and has a weak ATPase activity. The sequence is that of Thermosome subunit beta (thsB) from Halobacterium salinarum (strain ATCC 700922 / JCM 11081 / NRC-1) (Halobacterium halobium).